The primary structure comprises 188 residues: Peptidyl-tRNA hydrolase (188 aa).

A tRNA-binding site is contributed by Tyr14. Residue His19 is the Proton acceptor of the active site. Tyr64, Asn66, and Asn112 together coordinate tRNA.

Belongs to the PTH family. In terms of assembly, monomer.

Its subcellular location is the cytoplasm. It carries out the reaction an N-acyl-L-alpha-aminoacyl-tRNA + H2O = an N-acyl-L-amino acid + a tRNA + H(+). Its function is as follows. Hydrolyzes ribosome-free peptidyl-tRNAs (with 1 or more amino acids incorporated), which drop off the ribosome during protein synthesis, or as a result of ribosome stalling. Functionally, catalyzes the release of premature peptidyl moieties from peptidyl-tRNA molecules trapped in stalled 50S ribosomal subunits, and thus maintains levels of free tRNAs and 50S ribosomes. The protein is Peptidyl-tRNA hydrolase of Clostridium novyi (strain NT).